The chain runs to 305 residues: UDP-3-O-acyl-N-acetylglucosamine deacetylase (305 aa).

Residues histidine 78, histidine 237, and aspartate 241 each coordinate Zn(2+). The Proton donor role is filled by histidine 264.

This sequence belongs to the LpxC family. It depends on Zn(2+) as a cofactor.

The catalysed reaction is a UDP-3-O-[(3R)-3-hydroxyacyl]-N-acetyl-alpha-D-glucosamine + H2O = a UDP-3-O-[(3R)-3-hydroxyacyl]-alpha-D-glucosamine + acetate. The protein operates within glycolipid biosynthesis; lipid IV(A) biosynthesis; lipid IV(A) from (3R)-3-hydroxytetradecanoyl-[acyl-carrier-protein] and UDP-N-acetyl-alpha-D-glucosamine: step 2/6. Functionally, catalyzes the hydrolysis of UDP-3-O-myristoyl-N-acetylglucosamine to form UDP-3-O-myristoylglucosamine and acetate, the committed step in lipid A biosynthesis. The sequence is that of UDP-3-O-acyl-N-acetylglucosamine deacetylase from Burkholderia ambifaria (strain ATCC BAA-244 / DSM 16087 / CCUG 44356 / LMG 19182 / AMMD) (Burkholderia cepacia (strain AMMD)).